Reading from the N-terminus, the 458-residue chain is Acetylcholinesterase collagenic tail peptide (458 aa).

An N-terminal signal peptide occupies residues 1 to 22 (MAVLNPMTLGIYLQLFFCSIVS). Positions 51-67 (CCLLMPPPPPLFPPPFF) are PRAD. The disordered stretch occupies residues 89–291 (PSPCMQGSLG…GERGFPGPPG (203 aa)). 2 consecutive Collagen-like domains span residues 95–271 (GSLG…PGPP) and 279–293 (GLKG…PGRC). Pro residues predominate over residues 100 to 111 (PGPPGPQGPPGL). Positions 117 to 126 (PKGEKGDLGR) are enriched in basic and acidic residues. Residues 129–132 (RKGR) form a heparan sulfate proteoglycan binding region. Positions 133-151 (PGPPGVPGEPGPVGWPGPE) are enriched in pro residues. The segment covering 181–199 (RGEKGSRGERGDLGPKGEK) has biased composition (basic and acidic residues). A heparan sulfate proteoglycan binding region spans residues 234 to 237 (KRGK). Residues 262–271 (QGPPGPPGPP) are compositionally biased toward pro residues.

The protein belongs to the COLQ family. Homotrimer. Component of the asymmetric form of AChE, a disulfide-bonded oligomer composed of the collagenic subunits (Q) and a variable number of asymmetric catalytic subunits (T). The N-terminal of a collagenic subunit (Q) associates with the C-terminal of a catalytic subunit (T). The triple-helical tail is stabilized by disulfide bonds at each end. Expressed in skeletal muscle, heart, brain, as well as in lung, spleen, testis, but not liver. The short isoform represents about 5% of the transcripts in the soleus muscle and about 15% in the heart ventricle.

It is found in the synapse. Functionally, anchors the catalytic subunits of asymmetric AChE to the synaptic basal lamina. The sequence is that of Acetylcholinesterase collagenic tail peptide (Colq) from Rattus norvegicus (Rat).